The sequence spans 126 residues: MSQLTSSVRVDVKTEYIETQSSPDEDKYLFSYTITIHNLGSDDVTLKRRHWCITDSNGRKSEVHGTGVVGETPTIKPNSSYKYTSGTVLETPLGVMEGSYTMVDSNGDEFKAPISAFRLSIPGLLH.

The ApaG domain occupies 2-126 (SQLTSSVRVD…FRLSIPGLLH (125 aa)).

This Shewanella halifaxensis (strain HAW-EB4) protein is Protein ApaG.